Consider the following 254-residue polypeptide: Phosphoribosylaminoimidazole-succinocarboxamide synthase (254 aa).

It belongs to the SAICAR synthetase family.

It catalyses the reaction 5-amino-1-(5-phospho-D-ribosyl)imidazole-4-carboxylate + L-aspartate + ATP = (2S)-2-[5-amino-1-(5-phospho-beta-D-ribosyl)imidazole-4-carboxamido]succinate + ADP + phosphate + 2 H(+). Its pathway is purine metabolism; IMP biosynthesis via de novo pathway; 5-amino-1-(5-phospho-D-ribosyl)imidazole-4-carboxamide from 5-amino-1-(5-phospho-D-ribosyl)imidazole-4-carboxylate: step 1/2. In Brucella melitensis biotype 2 (strain ATCC 23457), this protein is Phosphoribosylaminoimidazole-succinocarboxamide synthase.